A 107-amino-acid polypeptide reads, in one-letter code: Thioredoxin (107 aa).

A Thioredoxin domain is found at 2-107; that stretch reads SVSQVTDASF…LESTLNKYIS (106 aa). Catalysis depends on nucleophile residues Cys-31 and Cys-34. The cysteines at positions 31 and 34 are disulfide-linked.

The protein belongs to the thioredoxin family.

It is found in the plastid. The protein resides in the chloroplast. Functionally, participates in various redox reactions through the reversible oxidation of its active center dithiol to a disulfide and catalyzes dithiol-disulfide exchange reactions. This is Thioredoxin (trxA) from Porphyra purpurea (Red seaweed).